Reading from the N-terminus, the 873-residue chain is K(+)/H(+) antiporter 1 (873 aa).

Topologically, residues 1–23 are extracellular; sequence MANTVGGILSGVNPFHYNSSSPL. The chain crosses the membrane as a helical span at residues 24 to 44; the sequence is TLFLFQACLILLVCNLIHIPF. Topologically, residues 45 to 51 are cytoplasmic; it reads SMMRQPK. Residues 52–72 form a helical membrane-spanning segment; sequence VISEVISGVILGPTIFGQIPN. Residues 73–82 lie on the Extracellular side of the membrane; the sequence is YTNTIFPTSS. Residues 83-103 form a helical membrane-spanning segment; that stretch reads IPGLNLVANLGIILFMFFLGL. The Cytoplasmic segment spans residues 104–116; that stretch reads EVDIAFIKKHLKK. A helical membrane pass occupies residues 117–137; sequence ALVIGIVTLAVPFGFGCLLAI. Residues 138–154 lie on the Extracellular side of the membrane; sequence PLFHTYANKTEGERHIK. A helical membrane pass occupies residues 155-175; that stretch reads FSVFMVFIAVSISVTAFPVLC. At 176–188 the chain is on the cytoplasmic side; sequence RILNELRLIKDRA. A helical membrane pass occupies residues 189-209; that stretch reads GIVVLAAGIINDIMGWILLAL. Residues 210 to 220 are Extracellular-facing; that stretch reads SIILSSAEGSP. A helical membrane pass occupies residues 221-241; sequence VNTVYILLITFAWFLIYFFPL. Residues 242–267 lie on the Cytoplasmic side of the membrane; the sequence is KYLLRWVLIRTHELDRSKPSPLATMC. A helical membrane pass occupies residues 268–288; it reads ILFIMFISAYFTDIIGVHPIF. Over 289-316 the chain is Extracellular; it reads GAFIAGLVVPRDDHYVVKLTERMEDIPN. A helical membrane pass occupies residues 317–337; sequence IVFIPIYFAVAGLNVDLTLLN. Residues 338 to 341 are Cytoplasmic-facing; sequence EGRD. The chain crosses the membrane as a helical span at residues 342-362; that stretch reads WGYVFATIGIAIFTKIISGTL. The Extracellular segment spans residues 363-375; that stretch reads TAKLTGLFWREAT. The helical transmembrane segment at 376–396 threads the bilayer; it reads AAGVLMSCKGIVEIVVLTVGL. At 397 to 404 the chain is on the cytoplasmic side; sequence NAGIISRK. A helical transmembrane segment spans residues 405-425; it reads IFGMFVLMALVSTFVTTPLTQ. Over 426–726 the chain is Extracellular; that stretch reads LVYPDSYRDG…DRFKRKRFNL (301 aa). Position 557 is a phosphoserine (serine 557). A Glycyl lysine isopeptide (Lys-Gly) (interchain with G-Cter in ubiquitin) cross-link involves residue lysine 562. A helical membrane pass occupies residues 727–747; sequence LLPKPYLTQSDYLGLYLLLLI. The Cytoplasmic portion of the chain corresponds to 748–873; sequence CYRDGYNNDN…TLIVHHFSSE (126 aa).

The protein belongs to the monovalent cation:proton antiporter 2 (CPA2) transporter (TC 2.A.37) family.

The protein resides in the membrane. Its function is as follows. Potassium-proton antiport. The sequence is that of K(+)/H(+) antiporter 1 (KHA1) from Saccharomyces cerevisiae (strain ATCC 204508 / S288c) (Baker's yeast).